Consider the following 1776-residue polypeptide: Non-structural replication polyprotein (1776 aa).

The 162-residue stretch at 58–219 folds into the Alphavirus-like MT domain; that stretch reads SGFGCNPHPH…DQPLDAISWL (162 aa). Residues 546 to 582 show a composition bias toward pro residues; it reads IALPPPIFRVPPPLPAQETPSPPAPALVPPTQPPQPQ. 2 disordered regions span residues 546 to 583 and 595 to 615; these read IALP…QPQP and LNAS…PSPI. In terms of domain architecture, Peptidase C21 spans 658–812; sequence PFPSSDLLSD…KLAAAAPGSN (155 aa). Active-site for protease activity residues include Cys-711 and His-797. Positions 866 to 1026 constitute a (+)RNA virus helicase ATP-binding domain; it reads SGPSNKSPKM…RLSKYIDCYC (161 aa). Residue 899–906 participates in ATP binding; it reads GFPGCGKS. One can recognise a (+)RNA virus helicase C-terminal domain in the interval 1027–1159; sequence WWTYRCPKAV…LPVDMMSAFP (133 aa). Residues 1497 to 1603 form the RdRp catalytic domain; sequence DAYICNDYTS…CGHPPINPNW (107 aa).

It belongs to the Tymoviridae non-structural replication polyprotein family. Specific enzymatic cleavages by the host yield mature proteins.

It catalyses the reaction RNA(n) + a ribonucleoside 5'-triphosphate = RNA(n+1) + diphosphate. Acts as a cysteine protease, methyltransferase and deubiquitinase. The cysteine protease activity cleaves the polyprotein giving rise to mature proteins. The methyltransferase domain is probably involved in viral RNA capping. In terms of biological role, RNA-directed RNA polymerase is responsible for the replication and transcription of the genome. The polypeptide is Non-structural replication polyprotein (Ononis yellow mosaic virus).